We begin with the raw amino-acid sequence, 331 residues long: MDRAAVARVGAVASASVCAVVAGVVLAQYIFTLKRKTGRKTKIIEMMPEFQKSSVRIKNPTRVEEIICGLIKGGAAKLQIITDFDMTLSRFSYNGKRCPTCHNIIDNCKLVTDECRRKLLQLKEQYYAIEVDPVLTVEEKFPYMVEWYTKSHGLLIEQGIPKAKLKEIVADSDVMLKEGYENFFGKLQQHGIPVFIFSAGIGDVLEEVIRQAGVYHSNVKVVSNFMDFDENGVLKGFKGELIHVFNKHDGALKNTDYFSQLKDNSNIILLGDSQGDLRMADGVANVEHILKIGYLNDRVDELLEKYMDSYDIVLVKEESLEVVNSILQKTL.

Catalysis depends on Asp-83, which acts as the Nucleophile. Mg(2+)-binding residues include Asp-83 and Asp-85. The Proton donor role is filled by Asp-85. Glu-130 provides a ligand contact to CMP. N(7)-methyl-GMP-binding residues include Glu-130 and Ser-151. Substrate-binding positions include 198–200 and Lys-247; that span reads SAG. Residue Asp-272 coordinates Mg(2+). Position 273 is a phosphoserine (Ser-273).

The protein belongs to the pyrimidine 5'-nucleotidase family. As to quaternary structure, monomer. Isoform 2 is highly expressed in the brain, heart, spleen, kidney and blood. Isoform 2 is expressed (at protein level) in the spleen, skeletal muscle and gastrointestinal epithelia.

Its subcellular location is the cytoplasm. The enzyme catalyses N(7)-methyl-GMP + H2O = N(7)-methylguanosine + phosphate. It carries out the reaction a ribonucleoside 5'-phosphate + H2O = a ribonucleoside + phosphate. Its function is as follows. Nucleotidase which shows specific activity towards cytidine monophosphate (CMP) and 7-methylguanosine monophosphate (m(7)GMP). CMP seems to be the preferred substrate. The chain is Cytosolic 5'-nucleotidase 3A (Nt5c3a) from Mus musculus (Mouse).